Here is a 398-residue protein sequence, read N- to C-terminus: Bifunctional enzyme IspD/IspF (398 aa).

Residues 1–234 (MAKSQRTAVV…ARLAAQLGDI (234 aa)) are 2-C-methyl-D-erythritol 4-phosphate cytidylyltransferase. The segment at 235 to 398 (RTGTGYDVHA…LPFNEKTWSV (164 aa)) is 2-C-methyl-D-erythritol 2,4-cyclodiphosphate synthase. A divalent metal cation contacts are provided by aspartate 241 and histidine 243. 4-CDP-2-C-methyl-D-erythritol 2-phosphate-binding positions include 241 to 243 (DVH) and 267 to 268 (HS). Histidine 275 provides a ligand contact to a divalent metal cation. Residues 289-291 (DIG), 365-368 (TTSE), phenylalanine 372, and arginine 375 each bind 4-CDP-2-C-methyl-D-erythritol 2-phosphate.

In the N-terminal section; belongs to the IspD/TarI cytidylyltransferase family. IspD subfamily. This sequence in the C-terminal section; belongs to the IspF family. A divalent metal cation is required as a cofactor.

It carries out the reaction 2-C-methyl-D-erythritol 4-phosphate + CTP + H(+) = 4-CDP-2-C-methyl-D-erythritol + diphosphate. The enzyme catalyses 4-CDP-2-C-methyl-D-erythritol 2-phosphate = 2-C-methyl-D-erythritol 2,4-cyclic diphosphate + CMP. Its pathway is isoprenoid biosynthesis; isopentenyl diphosphate biosynthesis via DXP pathway; isopentenyl diphosphate from 1-deoxy-D-xylulose 5-phosphate: step 2/6. It participates in isoprenoid biosynthesis; isopentenyl diphosphate biosynthesis via DXP pathway; isopentenyl diphosphate from 1-deoxy-D-xylulose 5-phosphate: step 4/6. Functionally, bifunctional enzyme that catalyzes the formation of 4-diphosphocytidyl-2-C-methyl-D-erythritol from CTP and 2-C-methyl-D-erythritol 4-phosphate (MEP) (IspD), and catalyzes the conversion of 4-diphosphocytidyl-2-C-methyl-D-erythritol 2-phosphate (CDP-ME2P) to 2-C-methyl-D-erythritol 2,4-cyclodiphosphate (ME-CPP) with a corresponding release of cytidine 5-monophosphate (CMP) (IspF). This Bradyrhizobium diazoefficiens (strain JCM 10833 / BCRC 13528 / IAM 13628 / NBRC 14792 / USDA 110) protein is Bifunctional enzyme IspD/IspF.